A 290-amino-acid chain; its full sequence is MNRPTAQGAVNLSGSKFSTAKSWEPEQERLTWQPGTVSMNTVTSPGPMANSVYVVAPPNSYPVVPGTVPQMPIYPSNQPQVHVISGHLPGLVPAMTEPPAQRVLKKGQVLGAIQILIGLVHIGLGSIMITNLFSHYTPVSLYGGFPFWGGIWFIISGSLSVAAETQPNSPCLLNGSVGLNIFSAICSAVGIMLFITDISISSGYIYPSYYPYQENLGVRTGVAISSVLLIFCLLELSIASVSSHFGCQVACCHYNNPGVVIPNVYAANPVVIPEPPNPIPSYSEVVQDSR.

The segment covering 1-21 (MNRPTAQGAVNLSGSKFSTAK) has biased composition (polar residues). The segment at 1-25 (MNRPTAQGAVNLSGSKFSTAKSWEP) is disordered. Residues 1–108 (MNRPTAQGAV…PAQRVLKKGQ (108 aa)) are Cytoplasmic-facing. A helical membrane pass occupies residues 109–129 (VLGAIQILIGLVHIGLGSIMI). At 130–138 (TNLFSHYTP) the chain is on the extracellular side. The helical transmembrane segment at 139 to 159 (VSLYGGFPFWGGIWFIISGSL) threads the bilayer. At 160–174 (SVAAETQPNSPCLLN) the chain is on the cytoplasmic side. A helical membrane pass occupies residues 175 to 195 (GSVGLNIFSAICSAVGIMLFI). Residues 196–220 (TDISISSGYIYPSYYPYQENLGVRT) lie on the Extracellular side of the membrane. Residues 221-241 (GVAISSVLLIFCLLELSIASV) form a helical membrane-spanning segment. Over 242–290 (SSHFGCQVACCHYNNPGVVIPNVYAANPVVIPEPPNPIPSYSEVVQDSR) the chain is Cytoplasmic.

It belongs to the MS4A family. As to expression, expressed strongly in intestine and colon and minimally in lung and ovary.

It is found in the membrane. May be involved in signal transduction as a component of a multimeric receptor complex. In Mus musculus (Mouse), this protein is Membrane-spanning 4-domains subfamily A member 8 (Ms4a8).